The chain runs to 204 residues: MSWTCPRCQQPVYFAEKVSSLGKNWHRFCLKCERCHSILSPGGHAEHNGRPYCHKPCYGALFGPRGVNIGGVGCYLYNLPTPPPASRISLSPSNFSPPRPRTGLSRAKKGPPYLKTFTGETSLCPGCGDPVFFAEKVMSLGRNWHRPCLRCQRCRKTLTAGSHAEHDGMPYCHIPCYGYLFGPKGVNIGDVGCYIYDPVDIRSK.

In terms of domain architecture, LIM zinc-binding 1 spans 3-64 (WTCPRCQQPV…KPCYGALFGP (62 aa)). A disordered region spans residues 88–107 (ISLSPSNFSPPRPRTGLSRA). One can recognise an LIM zinc-binding 2 domain in the interval 122–183 (SLCPGCGDPV…IPCYGYLFGP (62 aa)).

Expressed specifically by the thymus.

It is found in the cytoplasm. The protein is Cysteine-rich protein 3 (Crip3) of Mus musculus (Mouse).